The primary structure comprises 134 residues: ATP synthase epsilon chain (134 aa).

This sequence belongs to the ATPase epsilon chain family. As to quaternary structure, F-type ATPases have 2 components, CF(1) - the catalytic core - and CF(0) - the membrane proton channel. CF(1) has five subunits: alpha(3), beta(3), gamma(1), delta(1), epsilon(1). CF(0) has three main subunits: a, b and c.

The protein localises to the cell inner membrane. Functionally, produces ATP from ADP in the presence of a proton gradient across the membrane. The protein is ATP synthase epsilon chain of Solibacter usitatus (strain Ellin6076).